Here is a 229-residue protein sequence, read N- to C-terminus: Bcl-2-like protein 1 (229 aa).

Residues 4-24 carry the BH4 motif; it reads SNRELVIDFVSYKLSQRGHCW. Residues 82–96 carry the BH3 motif; the sequence is VRQALRDAGDEFELR. A BH1 motif is present at residues 125–144; it reads ELFHDGVNWGRIVAFFSFGG. Residues 176 to 191 carry the BH2 motif; sequence PWIQENGGWERFVDLY. Residues 206–223 traverse the membrane as a helical segment; it reads FNKWLLTGATVAGVLLLG.

This sequence belongs to the Bcl-2 family. In terms of tissue distribution, highest expression in organs with lymphoid development.

It is found in the mitochondrion membrane. It localises to the nucleus membrane. Its subcellular location is the mitochondrion matrix. The protein localises to the cytoplasm. The protein resides in the cytoskeleton. It is found in the microtubule organizing center. It localises to the centrosome. Its subcellular location is the cytosol. The protein localises to the cytoplasmic vesicle. The protein resides in the secretory vesicle. It is found in the synaptic vesicle membrane. Dominant regulator of apoptotic cell death. The long form displays cell death repressor activity, whereas the short isoform promotes apoptosis. Also acts as a regulator of G2 checkpoint and progression to cytokinesis during mitosis. The protein is Bcl-2-like protein 1 (BCL2L1) of Gallus gallus (Chicken).